We begin with the raw amino-acid sequence, 452 residues long: Tubulin alpha-6 chain (452 aa).

The GTP site is built by Gln-11, Glu-69, Ser-138, Gly-142, Thr-143, Thr-177, Asn-204, and Asn-226. Residue Glu-69 coordinates Mg(2+). Residue Glu-252 is part of the active site.

The protein belongs to the tubulin family. In terms of assembly, dimer of alpha and beta chains. A typical microtubule is a hollow water-filled tube with an outer diameter of 25 nm and an inner diameter of 15 nM. Alpha-beta heterodimers associate head-to-tail to form protofilaments running lengthwise along the microtubule wall with the beta-tubulin subunit facing the microtubule plus end conferring a structural polarity. Microtubules usually have 13 protofilaments but different protofilament numbers can be found in some organisms and specialized cells. Mg(2+) is required as a cofactor.

Its subcellular location is the cytoplasm. The protein resides in the cytoskeleton. It localises to the spindle. The enzyme catalyses GTP + H2O = GDP + phosphate + H(+). Tubulin is the major constituent of microtubules, a cylinder consisting of laterally associated linear protofilaments composed of alpha- and beta-tubulin heterodimers. Microtubules grow by the addition of GTP-tubulin dimers to the microtubule end, where a stabilizing cap forms. Below the cap, tubulin dimers are in GDP-bound state, owing to GTPase activity of alpha-tubulin. This Naegleria pringsheimi (Amoeba) protein is Tubulin alpha-6 chain (TUBA6).